Here is a 930-residue protein sequence, read N- to C-terminus: MITGLLKKVFGSRNERLIKQYRRTVEQINALEPKFEKLSDDELRGMTETFRQRHAGGESLEALLPEAFAVCREASKRIMKMRHFDVQMIGGMVLNDNKIAEMRTGEGKTLTATLAVYLNALTGKGVHVVTVNDYLAQRDAEWMGRLYNFLGLSVGVNLSQMPHDQKQIAYNADITYGTNNEFGFDYLRDNMVYDPSQRVQRPLHYAIVDEVDSILIDEARTPLIISGQAENQTDLYQRMNGIPKLLERQIGEEKADGTGVEKPGDYYVDEKGHQVYLTEAGHEKAEQILSQLGLISEGESLYAPQNITLMHHLYAALRAHSLFHRDQHYVVQNDEVIIVDEFTGRLMTGRRWSDGLHQAVEAKEGVTVQQENQTLATITFQNYFRMYEKLAGMTGTADTEAYEFQEIYGLEVVVIPTNRQAQRKDLQDQIYKTSKERYDAVVRDIRDCYDRGQPVLVGTTSIETSEYLSDLLNKEKLPHQVLNAKQHAREAEIVAQAGRPKMVTIATNMAGRGTDIVLGGNVEKQAGFIEADANLSDAEKAERIAKLKDEWQSLHDQVKAAGGLHIVGTERHESRRIDNQLRGRAGRQGDPGSSRFYLSLDDQLLRIFAGDRVRAIMERLKMPEGEPIEAGIVTRSIESAQRKVEGRNFDIRKQLLQYDDVANDQRKEIYKLRNDVLESQDVGDMVANLRESVLVEVFREYVPAESMEEQWDIAGLEQRLRDDWGLELPLAKTIEGAQSIEDEELLDMILKAAREHYDAKVAQVGRESFAGFERSVMLQSIDTHWREHLAALDHLRQGIHLRGYAQKDPKQEYKRESFELFARLLDVIKSEVTRVVFNVHIQSPEELEQASEQIEEGLAHLENVQYKHDEFAEGAEPVEQAEPARSNTAAAALAAMGGEAALAGMPKVGRNDPCPCGSGKKFKQCHGKLS.

ATP is bound by residues Gln-87, 105–109, and Asp-515; that span reads GEGKT. Cys-914, Cys-916, Cys-925, and His-926 together coordinate Zn(2+).

The protein belongs to the SecA family. Monomer and homodimer. Part of the essential Sec protein translocation apparatus which comprises SecA, SecYEG and auxiliary proteins SecDF-YajC and YidC. The cofactor is Zn(2+).

The protein resides in the cell inner membrane. The protein localises to the cytoplasm. The catalysed reaction is ATP + H2O + cellular proteinSide 1 = ADP + phosphate + cellular proteinSide 2.. Its function is as follows. Part of the Sec protein translocase complex. Interacts with the SecYEG preprotein conducting channel. Has a central role in coupling the hydrolysis of ATP to the transfer of proteins into and across the cell membrane, serving both as a receptor for the preprotein-SecB complex and as an ATP-driven molecular motor driving the stepwise translocation of polypeptide chains across the membrane. In Cupriavidus metallidurans (strain ATCC 43123 / DSM 2839 / NBRC 102507 / CH34) (Ralstonia metallidurans), this protein is Protein translocase subunit SecA.